The chain runs to 1047 residues: Formin-like protein 3 (1047 aa).

Gly-2 carries N-myristoyl glycine lipidation. The region spanning 22 to 462 (VPMPDPTELE…AAFQRHNNIE (441 aa)) is the GBD/FH3 domain. The tract at residues 520-561 (AVPVEAVAPPPPPPPPPPPPPPAPPLPSEVESIPIPPPPPPP) is disordered. A compositionally biased stretch (pro residues) spans 527 to 546 (APPPPPPPPPPPPPPAPPLP). One can recognise an FH2 domain in the interval 580–970 (IKKPIKTKFR…MREKLLAQEA (391 aa)). In terms of domain architecture, DAD spans 1000 to 1037 (DHRPVYEGKDGTIEDIITVLKSVPFTARTAKRGSRFFC).

The protein belongs to the formin homology family.

It is found in the cytoplasm. Its subcellular location is the cell membrane. Its function is as follows. Required for developmental angiogenesis, but not for vasculogenesis. The protein is Formin-like protein 3 (fmnl3) of Danio rerio (Zebrafish).